Here is a 2556-residue protein sequence, read N- to C-terminus: Non-reducing polyketide synthase tazA (2556 aa).

Residues 16-270 (LFGPQALSFT…QAIGLRGRFH (255 aa)) form an N-terminal acylcarrier protein transacylase domain (SAT) region. C143 (nucleophile; for transacylase activity) is an active-site residue. The active-site Proton donor/acceptor; for transacylase activity is H270. Residues 397 to 769 (EDEIAVIGMA…GSNASMIVTQ (373 aa)) enclose the Ketosynthase family 3 (KS3) domain. Residues 876-1209 (CFGGQISRFV…WAHHCTQAPA (334 aa)) form a malonyl-CoA:ACP transacylase (MAT) domain region. An N-terminal hotdog fold region spans residues 1254 to 1383 (YTFVGYQDEG…GQIIFQSAAE (130 aa)). The 307-residue stretch at 1254 to 1560 (YTFVGYQDEG…YSRLPKSTMS (307 aa)) folds into the PKS/mFAS DH domain. The interval 1257–1564 (VGYQDEGKRQ…PKSTMSKMLT (308 aa)) is product template (PT) domain. The active-site Proton acceptor; for dehydratase activity is the H1285. The interval 1408–1560 (DPDDVLQGRN…YSRLPKSTMS (153 aa)) is C-terminal hotdog fold. D1465 serves as the catalytic Proton donor; for dehydratase activity. The segment at 1567 to 1621 (TAPSERRAQVDSPSMPASINAPPSASEQAPVEPAPQTKESAPIAEPGAGGQSNSK) is disordered. Positions 1577–1593 (DSPSMPASINAPPSASE) are enriched in polar residues. A Carrier domain is found at 1620–1694 (SKVPGIVVEV…DVVQCVHKTL (75 aa)). At S1654 the chain carries O-(pantetheine 4'-phosphoryl)serine. The disordered stretch occupies residues 1700 to 1731 (SAAQESEGNLTPASSGTQSPRSDPVSDTSLSD). Residues 1702–1731 (AQESEGNLTPASSGTQSPRSDPVSDTSLSD) are compositionally biased toward polar residues. A methyltransferase domain region spans residues 1830 to 2107 (LEHEGRLIDI…DWTDGHLAEN (278 aa)). Positions 2180 to 2424 (VTGATGSLGA…WTPVDVVAST (245 aa)) are NADPH-binding (R) domain.

The cofactor is pantetheine 4'-phosphate.

It functions in the pathway secondary metabolite biosynthesis. Non-reducing polyketide synthase; part of the gene cluster that mediates the biosynthesis of azaterrilone A and other azaphilones, a class of fungal metabolites characterized by a highly oxygenated pyrano-quinone bicyclic core and exhibiting a broad range of bioactivities. The first step of the pathway begins with tazA that assembles one acetyl-CoA starter unit, five malonyl-CoA units, and catalyzes a series of Claisen condensations, methylation, PT-mediated cyclization, and finally releases the first hexaketide precursor through the R-domain. The tazA product then undergoes reduction on its terminal ketone and the following pyran-ring formation by yet undetermined enzyme(s). Dehydration and enoyl reduction, possibly involving the trans-enoyl reductase tazE leads to the next intermediate. TazD is predicted as an acetyltransferase and might catalyze the acetylation steps leading to the synthesis of azaterrilone A. Azaterrilone A is not the final product of the taz pathway and both the highly reducing polyketide synthase tazB and the dual enzyme tazHJ catalyze late steps of the pathway, leading to the production of the 2 final stereoisomers that contain additional polyketide modification whose structures have still to be determined. This chain is Non-reducing polyketide synthase tazA, found in Aspergillus terreus (strain NIH 2624 / FGSC A1156).